A 359-amino-acid polypeptide reads, in one-letter code: Large ribosomal subunit protein uL3 (359 aa).

The interval 336–359 (VRPPAKRPPAEAPQITYISRESKQ) is disordered.

The protein belongs to the universal ribosomal protein uL3 family. Part of the 50S ribosomal subunit. Forms a cluster with proteins L14 and L24e.

Its function is as follows. One of the primary rRNA binding proteins, it binds directly near the 3'-end of the 23S rRNA, where it nucleates assembly of the 50S subunit. This is Large ribosomal subunit protein uL3 from Thermococcus sibiricus (strain DSM 12597 / MM 739).